Reading from the N-terminus, the 128-residue chain is MTTSSYFLLVTLGLLLYVCRSSFGTEHTCESDASPHPQGVCGSPLAEAVEAACELEEYLQGGTGKKRGRASPLRKRRAFLSMLKARAKRNEASPLQRSGRGIVCECCKNHCNIEELTEYCPPVTEGSG.

Residues 1-24 form the signal peptide; it reads MTTSSYFLLVTLGLLLYVCRSSFG. Disulfide bonds link cysteine 29–cysteine 104, cysteine 41–cysteine 107, cysteine 53–cysteine 120, and cysteine 106–cysteine 111. The propeptide at 59-89 is c peptide; it reads LQGGTGKKRGRASPLRKRRAFLSMLKARAKR. A 4-carboxyglutamate; partial modification is found at glutamate 115. Serine 127 is subject to Serine amide.

Belongs to the insulin family. As to quaternary structure, heterodimer of A and B chains; disulfide-linked. As to expression, expressed by the venom gland.

Its subcellular location is the secreted. Functionally, this venom insulin facilitates prey capture by rapidly inducing hypoglycemic shock. Intraperitoneal injection of this peptide into zebrafish lowers blood glucose with the same potency than human insulin. In vivo, when applied to water, this peptide reduces overall locomotor activity of zebrafish larvae, observed as a significant decrease in the percentage of time spent swimming and movement frequency. The chain is Con-Ins F1 from Conus floridulus (Cone snail).